Consider the following 1176-residue polypeptide: DNA-directed RNA polymerase subunit beta (1176 aa).

Residues 13–30 (TDASLHQGRPQSSSNSSV) are compositionally biased toward polar residues. The tract at residues 13–35 (TDASLHQGRPQSSSNSSVPGAPN) is disordered.

Belongs to the RNA polymerase beta chain family. In terms of assembly, the RNAP catalytic core consists of 2 alpha, 1 beta, 1 beta' and 1 omega subunit. When a sigma factor is associated with the core the holoenzyme is formed, which can initiate transcription.

It carries out the reaction RNA(n) + a ribonucleoside 5'-triphosphate = RNA(n+1) + diphosphate. Its function is as follows. DNA-dependent RNA polymerase catalyzes the transcription of DNA into RNA using the four ribonucleoside triphosphates as substrates. In Mycobacterium marinum (strain ATCC BAA-535 / M), this protein is DNA-directed RNA polymerase subunit beta.